Consider the following 281-residue polypeptide: Octanoyl-[GcvH]:protein N-octanoyltransferase (281 aa).

Residues 44-250 enclose the BPL/LPL catalytic domain; the sequence is GESAATMRSW…TLQQFAPKLT (207 aa). Cys149 (acyl-thioester intermediate) is an active-site residue.

It belongs to the octanoyltransferase LipL family.

It carries out the reaction N(6)-octanoyl-L-lysyl-[glycine-cleavage complex H protein] + L-lysyl-[lipoyl-carrier protein] = N(6)-octanoyl-L-lysyl-[lipoyl-carrier protein] + L-lysyl-[glycine-cleavage complex H protein]. The protein operates within protein modification; protein lipoylation via endogenous pathway; protein N(6)-(lipoyl)lysine from octanoyl-[acyl-carrier-protein]. Its function is as follows. Catalyzes the amidotransfer (transamidation) of the octanoyl moiety from octanoyl-GcvH to the lipoyl domain of the E2 subunit of lipoate-dependent enzymes. This chain is Octanoyl-[GcvH]:protein N-octanoyltransferase, found in Bacillus anthracis.